The chain runs to 75 residues: Defensin-like protein 59 (75 aa).

Positions 1–19 (MNITKSYVVIFFLVMLTNS) are cleaved as a signal peptide. 4 disulfide bridges follow: C39–C73, C43–C66, C52–C71, and C56–C72.

The protein belongs to the DEFL family.

The protein resides in the secreted. The sequence is that of Defensin-like protein 59 from Arabidopsis thaliana (Mouse-ear cress).